The following is a 149-amino-acid chain: Transcriptional repressor NrdR (149 aa).

A zinc finger lies at 3 to 34; sequence CPFCSEQETKVIDSRLVAEGQQVRRRRECMVC. Residues 49–139 enclose the ATP-cone domain; sequence PRVIKRDGSR…VYRSFEDIRE (91 aa).

This sequence belongs to the NrdR family. The cofactor is Zn(2+).

Negatively regulates transcription of bacterial ribonucleotide reductase nrd genes and operons by binding to NrdR-boxes. The protein is Transcriptional repressor NrdR of Alteromonas mediterranea (strain DSM 17117 / CIP 110805 / LMG 28347 / Deep ecotype).